The following is a 274-amino-acid chain: Large ribosomal subunit protein uL2 (274 aa).

Positions 223-265 (VVMNPVDHPHGGGEGRTSGGRHPVSPWGMPTKGFKTRKNKRTD) are disordered. Basic residues predominate over residues 256 to 265 (FKTRKNKRTD).

Belongs to the universal ribosomal protein uL2 family. Part of the 50S ribosomal subunit. Forms a bridge to the 30S subunit in the 70S ribosome.

One of the primary rRNA binding proteins. Required for association of the 30S and 50S subunits to form the 70S ribosome, for tRNA binding and peptide bond formation. It has been suggested to have peptidyltransferase activity; this is somewhat controversial. Makes several contacts with the 16S rRNA in the 70S ribosome. The protein is Large ribosomal subunit protein uL2 of Vibrio parahaemolyticus serotype O3:K6 (strain RIMD 2210633).